Consider the following 371-residue polypeptide: Glutamate 5-kinase (371 aa).

K11 contacts ATP. Substrate contacts are provided by S52, D139, and N151. Residues 171–172 (TD) and 213–219 (TGGMATK) each bind ATP. A PUA domain is found at 278–356 (EGSLTLDEGA…AEIPRILGYE (79 aa)).

It belongs to the glutamate 5-kinase family.

It is found in the cytoplasm. It carries out the reaction L-glutamate + ATP = L-glutamyl 5-phosphate + ADP. The protein operates within amino-acid biosynthesis; L-proline biosynthesis; L-glutamate 5-semialdehyde from L-glutamate: step 1/2. Catalyzes the transfer of a phosphate group to glutamate to form L-glutamate 5-phosphate. The sequence is that of Glutamate 5-kinase from Synechococcus sp. (strain JA-2-3B'a(2-13)) (Cyanobacteria bacterium Yellowstone B-Prime).